A 189-amino-acid chain; its full sequence is Elongation factor P (189 aa).

The protein belongs to the elongation factor P family.

It is found in the cytoplasm. Its pathway is protein biosynthesis; polypeptide chain elongation. Involved in peptide bond synthesis. Stimulates efficient translation and peptide-bond synthesis on native or reconstituted 70S ribosomes in vitro. Probably functions indirectly by altering the affinity of the ribosome for aminoacyl-tRNA, thus increasing their reactivity as acceptors for peptidyl transferase. In Pseudomonas savastanoi pv. phaseolicola (strain 1448A / Race 6) (Pseudomonas syringae pv. phaseolicola (strain 1448A / Race 6)), this protein is Elongation factor P.